The primary structure comprises 285 residues: Polyamine aminopropyltransferase (285 aa).

The PABS domain maps to 5–241 (QDWFTESYPD…GWWSATMAGK (237 aa)). Q35 serves as a coordination point for S-methyl-5'-thioadenosine. 2 residues coordinate spermidine: H66 and D90. S-methyl-5'-thioadenosine-binding positions include D110 and 141–142 (DG). D160 serves as the catalytic Proton acceptor. A spermidine-binding site is contributed by 160–163 (DSTD). P167 serves as a coordination point for S-methyl-5'-thioadenosine.

It belongs to the spermidine/spermine synthase family. In terms of assembly, homodimer or homotetramer.

The protein localises to the cytoplasm. It carries out the reaction S-adenosyl 3-(methylsulfanyl)propylamine + putrescine = S-methyl-5'-thioadenosine + spermidine + H(+). It functions in the pathway amine and polyamine biosynthesis; spermidine biosynthesis; spermidine from putrescine: step 1/1. Catalyzes the irreversible transfer of a propylamine group from the amino donor S-adenosylmethioninamine (decarboxy-AdoMet) to putrescine (1,4-diaminobutane) to yield spermidine. This Methylococcus capsulatus (strain ATCC 33009 / NCIMB 11132 / Bath) protein is Polyamine aminopropyltransferase.